The chain runs to 258 residues: Ciliogenesis and planar polarity effector 2 (258 aa).

The segment at 51–258 (IDTASYKIFV…LPSSPESAPG (208 aa)) is small GTPase-like. The GTP site is built by Ser64, Gly65, Gly67, Lys68, Thr69, Ala70, Ile82, His84, Thr87, Lys176, Asp178, and Ser206.

It belongs to the small GTPase superfamily. Rab family. In terms of assembly, interacts with FUZ. Associates with the CPLANE (ciliogenesis and planar polarity effectors) complex via its interaction with FUZ.

The protein resides in the cytoplasm. It localises to the cytoskeleton. Its subcellular location is the cilium basal body. It is found in the microtubule organizing center. The protein localises to the centrosome. The protein resides in the centriole. Functionally, required for efficient primary cilia initiation, regulating a late step in cilia initiation. Plays a role in the final maturation of the mother centriole and ciliary vesicle that allows extension of the ciliary axoneme. The polypeptide is Ciliogenesis and planar polarity effector 2 (Cplane2) (Mus musculus (Mouse)).